A 399-amino-acid polypeptide reads, in one-letter code: Methylmalonic aciduria type A homolog, mitochondrial (399 aa).

Residues 1-15 (MVVRSLLRVSRLTSA) constitute a mitochondrion transit peptide. Residues 131–139 (GSPGVGKSS), Asp274, and 310–312 (SIM) contribute to the GTP site.

It belongs to the SIMIBI class G3E GTPase family. ArgK/MeaB subfamily.

Its subcellular location is the mitochondrion. In terms of biological role, may have GTPase activity. May also bind and hydrolyze ATP. May function as chaperone. Likely to have a role in propionyl-CoA and adenosylcobalamin metabolism. This is Methylmalonic aciduria type A homolog, mitochondrial (mmaa-1) from Caenorhabditis elegans.